A 273-amino-acid chain; its full sequence is Trypsin-6 (273 aa).

The first 22 residues, 1-22, serve as a signal peptide directing secretion; it reads MLSKFTAILLAVHIALFACALT. Positions 23-46 are cleaved as a propeptide — activation peptide; the sequence is QAEKRHKLTRPAFHPNAPYLAGKR. In terms of domain architecture, Peptidase S1 spans 47–272; sequence IVGGFVIDIS…VRDWIRETSG (226 aa). Cys-72 and Cys-88 are oxidised to a cystine. Active-site charge relay system residues include His-87 and Asp-132. Cystine bridges form between Cys-197–Cys-213 and Cys-224–Cys-248. Ser-228 (charge relay system) is an active-site residue.

It belongs to the peptidase S1 family. As to expression, expressed in the midgut. Expression levels drop a few hours after blood feeding and pick up again 28 hours later.

It localises to the secreted. The catalysed reaction is Preferential cleavage: Arg-|-Xaa, Lys-|-Xaa.. Its function is as follows. Constitutive trypsin that is expressed 2 days after emergence, coinciding with host seeking behavior of the female. This is Trypsin-6 (TRYP6) from Anopheles gambiae (African malaria mosquito).